Here is a 521-residue protein sequence, read N- to C-terminus: Probable cytosol aminopeptidase (521 aa).

Lysine 268 and aspartate 273 together coordinate Mn(2+). Residue lysine 280 is part of the active site. The Mn(2+) site is built by aspartate 291, aspartate 350, and glutamate 352. Arginine 354 is an active-site residue.

It belongs to the peptidase M17 family. It depends on Mn(2+) as a cofactor.

The protein resides in the cytoplasm. It carries out the reaction Release of an N-terminal amino acid, Xaa-|-Yaa-, in which Xaa is preferably Leu, but may be other amino acids including Pro although not Arg or Lys, and Yaa may be Pro. Amino acid amides and methyl esters are also readily hydrolyzed, but rates on arylamides are exceedingly low.. The catalysed reaction is Release of an N-terminal amino acid, preferentially leucine, but not glutamic or aspartic acids.. Functionally, presumably involved in the processing and regular turnover of intracellular proteins. Catalyzes the removal of unsubstituted N-terminal amino acids from various peptides. This is Probable cytosol aminopeptidase from Chromobacterium violaceum (strain ATCC 12472 / DSM 30191 / JCM 1249 / CCUG 213 / NBRC 12614 / NCIMB 9131 / NCTC 9757 / MK).